Consider the following 306-residue polypeptide: Low-density lipoprotein receptor class A domain-containing protein 4 (306 aa).

Over 1-64 (MPEAGFQATN…PPGIFNSELE (64 aa)) the chain is Lumenal. Residues 11–48 (AFTECKFTCTSGKCLYLGSLVCNQQNDCGDNSDEENCL) enclose the LDL-receptor class A domain. Disulfide bonds link Cys-19/Cys-38 and Cys-32/Cys-47. Residues 65–85 (FAQILIIVVVVTVMVVVVVCL) traverse the membrane as a helical segment. At 86 to 306 (LNHYKVSTRS…GKDRKPGDLV (221 aa)) the chain is on the cytoplasmic side. The disordered stretch occupies residues 100-127 (PNQSQRQEDGLQPEGSLWPSDSSVQRPG). The short motif at 180–183 (PPPY) is the PPxY motif 1 element. Positions 208–211 (PPNR) match the SMAD interaction motif (SIM) motif. The PPxY motif 2 signature appears at 252–255 (PPTY). The interval 268–306 (FHHQHSNTHRGSRPQFQPNNSEGTIVPIKGKDRKPGDLV) is disordered. Residues 269-279 (HHQHSNTHRGS) are compositionally biased toward basic residues. The segment covering 281 to 290 (PQFQPNNSEG) has biased composition (polar residues). Residues 296–306 (KGKDRKPGDLV) are compositionally biased toward basic and acidic residues.

This sequence belongs to the PMEPA1 family. Interacts with PMEPA1. Interacts (via the SMAD interaction motif) with SMAD2 and SMAD3. In terms of tissue distribution, detected in all tissues tested.

The protein localises to the early endosome membrane. Functions as a negative regulator of TGF-beta signaling and thereby probably plays a role in cell proliferation, differentiation, apoptosis, motility, extracellular matrix production and immunosuppression. In the canonical TGF-beta pathway, ZFYVE9/SARA recruits the intracellular signal transducer and transcriptional modulators SMAD2 and SMAD3 to the TGF-beta receptor. Phosphorylated by the receptor, SMAD2 and SMAD3 then form a heteromeric complex with SMAD4 that translocates to the nucleus to regulate transcription. Through interaction with SMAD2 and SMAD3, LDLRAD4 may compete with ZFYVE9 and SMAD4 and prevent propagation of the intracellular signal. This chain is Low-density lipoprotein receptor class A domain-containing protein 4 (Ldlrad4), found in Mus musculus (Mouse).